The sequence spans 156 residues: Transcriptional repressor NrdR (156 aa).

Residues 3–34 (CPFCGNVDTQVKDSRPAEDHVAIRRRRFCPAC) fold into a zinc finger. Residues 49–139 (LVVIKSNGKR…VYKNFQATGD (91 aa)) form the ATP-cone domain.

It belongs to the NrdR family. It depends on Zn(2+) as a cofactor.

In terms of biological role, negatively regulates transcription of bacterial ribonucleotide reductase nrd genes and operons by binding to NrdR-boxes. The protein is Transcriptional repressor NrdR of Jannaschia sp. (strain CCS1).